A 127-amino-acid chain; its full sequence is Probable glycine cleavage system H protein (127 aa).

A Lipoyl-binding domain is found at 24 to 106; the sequence is TAEVGITAFA…FGDGWMLTVE (83 aa). N6-lipoyllysine is present on lysine 65.

It belongs to the GcvH family. The glycine cleavage system is composed of four proteins: P, T, L and H. Requires (R)-lipoate as cofactor.

Its function is as follows. The glycine cleavage system catalyzes the degradation of glycine. The H protein shuttles the methylamine group of glycine from the P protein to the T protein. The polypeptide is Probable glycine cleavage system H protein (Haloarcula marismortui (strain ATCC 43049 / DSM 3752 / JCM 8966 / VKM B-1809) (Halobacterium marismortui)).